Here is a 543-residue protein sequence, read N- to C-terminus: MGCIKSKENKSPAIKYRPENTPEPVSTSVSHYGAEPTTVSPCPSSSAKGTAVNFSSLSMTPFGGSSGVTPFGGASSSFSVVPSSYPAGLTGGVTIFVALYDYEARTTEDLSFKKGERFQIINNTEGDWWEARSIATGKNGYIPSNYVAPADSIQAEEWYFGKMGRKDAERLLLNPGNQRGIFLVRESETTKGAYSLSIRDWDEIRGDNVKHYKIRKLDNGGYYITTRAQFDTLQKLVKHYTEHADGLCHKLTTVCPTVKPQTQGLAKDAWEIPRESLRLEVKLGQGCFGEVWMGTWNGTTKVAIKTLKPGTMMPEAFLQEAQIMKKLRHDKLVPLYAVVSEEPIYIVTEFMSKGSLLDFLKEGDGKYLKLPQLVDMAAQIADGMAYIERMNYIHRDLRAANILVGENLVCKIADFGLARLIEDNEYTARQGAKFPIKWTAPEAALYGRFTIKSDVWSFGILQTELVTKGRVPYPGMVNREVLEQVERGYRMPCPQGCPESLHELMNLCWKKDPDERPTFEYIQSFLEDYFTATEPQYQPGENL.

Residues 1–20 (MGCIKSKENKSPAIKYRPEN) are compositionally biased toward basic and acidic residues. The tract at residues 1–45 (MGCIKSKENKSPAIKYRPENTPEPVSTSVSHYGAEPTTVSPCPSS) is disordered. The N-myristoyl glycine moiety is linked to residue Gly-2. A lipid anchor (S-palmitoyl cysteine; in membrane form) is attached at Cys-3. Thr-21 is modified (phosphothreonine). Tyr-32 is subject to Phosphotyrosine. Position 40 is a phosphoserine (Ser-40). Positions 91–152 (GGVTIFVALY…PSNYVAPADS (62 aa)) constitute an SH3 domain. The SH2 domain occupies 158–255 (WYFGKMGRKD…GLCHKLTTVC (98 aa)). One can recognise a Protein kinase domain in the interval 277 to 530 (LRLEVKLGQG…YIQSFLEDYF (254 aa)). ATP-binding positions include 283-291 (LGQGCFGEV) and Lys-305. Residues Tyr-336 and Tyr-345 each carry the phosphotyrosine modification. Asp-396 (proton acceptor) is an active-site residue. Phosphotyrosine; by autocatalysis is present on Tyr-426. Tyr-446 carries the post-translational modification Phosphotyrosine. A Phosphotyrosine; by CSK modification is found at Tyr-537.

Belongs to the protein kinase superfamily. Tyr protein kinase family. SRC subfamily. As to quaternary structure, interacts with YAP1 and CSF1R. Interacts with CTNND1; this interaction allows YES1-mediated activation of FYN and FER and subsequent phosphorylation of CTNND1. Interacts with FASLG. Interacts with IL6ST/gp130. Interacts with SCRIB, when YES1 is in a closed conformation; the interaction facilitates YES1 autophosphorylation. Phosphorylated. Phosphorylation by CSK on the C-terminal tail maintains the enzyme in an inactive state. Autophosphorylation at Tyr-426 maintains enzyme activity by blocking CSK-mediated inhibition. In terms of processing, palmitoylation at Cys-3 promotes membrane localization. As to expression, expressed in the epithelial cells of renal proximal tubules and stomach as well as hematopoietic cells in the bone marrow and spleen in the fetal tissues. In adult, expressed in epithelial cells of the renal proximal tubules and present in keratinocytes in the basal epidermal layer of epidermis.

The protein localises to the cell membrane. It localises to the cytoplasm. The protein resides in the cytoskeleton. It is found in the microtubule organizing center. Its subcellular location is the centrosome. The protein localises to the cytosol. It localises to the cell junction. It catalyses the reaction L-tyrosyl-[protein] + ATP = O-phospho-L-tyrosyl-[protein] + ADP + H(+). Non-receptor protein tyrosine kinase that is involved in the regulation of cell growth and survival, apoptosis, cell-cell adhesion, cytoskeleton remodeling, and differentiation. Stimulation by receptor tyrosine kinases (RTKs) including EGFR, PDGFR, CSF1R and FGFR leads to recruitment of YES1 to the phosphorylated receptor, and activation and phosphorylation of downstream substrates. Upon EGFR activation, promotes the phosphorylation of PARD3 to favor epithelial tight junction assembly. Participates in the phosphorylation of specific junctional components such as CTNND1 by stimulating the FYN and FER tyrosine kinases at cell-cell contacts. Upon T-cell stimulation by CXCL12, phosphorylates collapsin response mediator protein 2/DPYSL2 and induces T-cell migration. Participates in CD95L/FASLG signaling pathway and mediates AKT-mediated cell migration. Plays a role in cell cycle progression by phosphorylating the cyclin-dependent kinase 4/CDK4 thus regulating the G1 phase. Also involved in G2/M progression and cytokinesis. Catalyzes phosphorylation of organic cation transporter OCT2 which induces its transport activity. This Homo sapiens (Human) protein is Tyrosine-protein kinase Yes (YES1).